The primary structure comprises 836 residues: MGLLSAVFGTYSEREVKRIRPIVSKINELDEVMQKLSDDELKAKTVEFKERLNNGETVDDILPEAFAVVREASKRVLNMKHYDEQLIGGVVLHQGRIAEMKTGEGKTLVATLPAYLNGLTGKGVHIITVNDYLAKRDAEQMGELYGFLGLTTGVIVHELTNEQRREAYNSDITYGTNNEFGFDYLRDNMVIYKEERVQRKLNFTIVDEVDSILIDEARTPLIISGQGEKSTEFYKVADYFVKTLVKEKDYTIDEKANAVMLTDEGFHKAEQTFKVENYADAENVELQHYVTQALKANYAMRRDKDYMVKDGEVIIVDEFTGRLMEGRRYSDGLHQAIEAKENVKIARESKTLATITFQNYFRMYEKLSGMTGTALTEENEFREIYGLDVIVVPTHKPVVRIDNPDLVFKSEKGKIMAVVDEIAKAHEVGQPVLVGTVSIEKSELISSMLKKKGVPHQVLNAKFHEQEAEIITHAGEKGMVTIATNMAGRGTDIKLGEGVLEIGGLKIIGTERHESRRIDNQLRGRSGRQGDSGESTFFISLEDDLMRIFGSEKIQGVVEKLGLEEDEAIESKLVSKSIENAQKKVEGNNFDIRKTLLGYDDVMNKQREVIYKQRSEVLEGEDVKEEILHMLRDVISDAVNTHIKEDAEDYRESFLYLISYLNDICIPTNEVNLPALADMSKEEIVDHLYDVAVKSYENKEAEFTPERLREIERVVLLRSVDTKWMDHINNMDNLKQGIGLRAFKQVDPVQAYQMEGSAMFEEMIDSIKNETVKMLFHVKVERAPERVRVAQETNAVHGDKPSAPVGPVRNLNKFGRNDVCPCGSGKKFKNCCGREA.

Residues Gln85, 103 to 107, and Asp492 contribute to the ATP site; that span reads GEGKT. Zn(2+) is bound by residues Cys820, Cys822, Cys831, and Cys832.

Belongs to the SecA family. As to quaternary structure, monomer and homodimer. Part of the essential Sec protein translocation apparatus which comprises SecA, SecYEG and auxiliary proteins SecDF. Other proteins may also be involved. Zn(2+) serves as cofactor.

The protein resides in the cell membrane. It localises to the cytoplasm. The enzyme catalyses ATP + H2O + cellular proteinSide 1 = ADP + phosphate + cellular proteinSide 2.. Its function is as follows. Part of the Sec protein translocase complex. Interacts with the SecYEG preprotein conducting channel. Has a central role in coupling the hydrolysis of ATP to the transfer of proteins into and across the cell membrane, serving as an ATP-driven molecular motor driving the stepwise translocation of polypeptide chains across the membrane. This is Protein translocase subunit SecA from Clostridium botulinum (strain Alaska E43 / Type E3).